The sequence spans 206 residues: Thymidylate kinase (206 aa).

11 to 18 (GIDGAGKT) contacts ATP.

Belongs to the thymidylate kinase family.

The catalysed reaction is dTMP + ATP = dTDP + ADP. In terms of biological role, phosphorylation of dTMP to form dTDP in both de novo and salvage pathways of dTTP synthesis. This is Thymidylate kinase from Paraburkholderia xenovorans (strain LB400).